The following is a 232-amino-acid chain: Biosynthetic peptidoglycan transglycosylase (232 aa).

A helical membrane pass occupies residues 14 to 34 (AAVALVLLYQLWIFAHVLWWI).

It belongs to the glycosyltransferase 51 family.

The protein localises to the cell inner membrane. It catalyses the reaction [GlcNAc-(1-&gt;4)-Mur2Ac(oyl-L-Ala-gamma-D-Glu-L-Lys-D-Ala-D-Ala)](n)-di-trans,octa-cis-undecaprenyl diphosphate + beta-D-GlcNAc-(1-&gt;4)-Mur2Ac(oyl-L-Ala-gamma-D-Glu-L-Lys-D-Ala-D-Ala)-di-trans,octa-cis-undecaprenyl diphosphate = [GlcNAc-(1-&gt;4)-Mur2Ac(oyl-L-Ala-gamma-D-Glu-L-Lys-D-Ala-D-Ala)](n+1)-di-trans,octa-cis-undecaprenyl diphosphate + di-trans,octa-cis-undecaprenyl diphosphate + H(+). The protein operates within cell wall biogenesis; peptidoglycan biosynthesis. In terms of biological role, peptidoglycan polymerase that catalyzes glycan chain elongation from lipid-linked precursors. This is Biosynthetic peptidoglycan transglycosylase from Thiobacillus denitrificans (strain ATCC 25259 / T1).